The sequence spans 117 residues: Large ribosomal subunit protein bL20c (117 aa).

It belongs to the bacterial ribosomal protein bL20 family.

Its subcellular location is the plastid. The protein localises to the chloroplast. In terms of biological role, binds directly to 23S ribosomal RNA and is necessary for the in vitro assembly process of the 50S ribosomal subunit. It is not involved in the protein synthesizing functions of that subunit. The polypeptide is Large ribosomal subunit protein bL20c (rpl20) (Arabidopsis thaliana (Mouse-ear cress)).